The sequence spans 98 residues: NADH-ubiquinone oxidoreductase chain 4L (98 aa).

Helical transmembrane passes span 1–21 (MTAI…GVLV), 29–49 (TLLC…LLIT), and 59–79 (LPLT…ALLV).

Belongs to the complex I subunit 4L family. Core subunit of respiratory chain NADH dehydrogenase (Complex I) which is composed of 45 different subunits.

It is found in the mitochondrion inner membrane. The catalysed reaction is a ubiquinone + NADH + 5 H(+)(in) = a ubiquinol + NAD(+) + 4 H(+)(out). In terms of biological role, core subunit of the mitochondrial membrane respiratory chain NADH dehydrogenase (Complex I) which catalyzes electron transfer from NADH through the respiratory chain, using ubiquinone as an electron acceptor. Part of the enzyme membrane arm which is embedded in the lipid bilayer and involved in proton translocation. The protein is NADH-ubiquinone oxidoreductase chain 4L (MT-ND4L) of Notoryctes typhlops (Southern marsupial mole).